Here is a 314-residue protein sequence, read N- to C-terminus: L-lactate dehydrogenase (314 aa).

NAD(+)-binding positions include V17, D38, K43, Y69, and 83–84 (GA). Residues Q86 and R92 each contribute to the substrate site. Residues S105, 122-124 (ASN), and S147 contribute to the NAD(+) site. 124–127 (NPVD) lines the substrate pocket. 152–155 (DSAR) lines the substrate pocket. Beta-D-fructose 1,6-bisphosphate is bound by residues R157 and H172. H179 acts as the Proton acceptor in catalysis. A Phosphotyrosine modification is found at Y223. T232 is a binding site for substrate.

Belongs to the LDH/MDH superfamily. LDH family. Homotetramer.

It is found in the cytoplasm. It catalyses the reaction (S)-lactate + NAD(+) = pyruvate + NADH + H(+). It participates in fermentation; pyruvate fermentation to lactate; (S)-lactate from pyruvate: step 1/1. Its activity is regulated as follows. Allosterically activated by fructose 1,6-bisphosphate (FBP). Its function is as follows. Catalyzes the conversion of lactate to pyruvate. The sequence is that of L-lactate dehydrogenase from Corynebacterium glutamicum (strain R).